A 393-amino-acid chain; its full sequence is S-adenosylmethionine synthase 2 (393 aa).

Mg(2+) is bound at residue Glu-9. His-15 contributes to the ATP binding site. Glu-43 contacts K(+). L-methionine is bound by residues Glu-56 and Gln-99. Residues 167-169 (DGK), 235-238 (SGRF), Asp-246, 252-253 (RK), Ala-269, Lys-273, and Lys-277 each bind ATP. Asp-246 lines the L-methionine pocket. An L-methionine-binding site is contributed by Lys-277.

Belongs to the AdoMet synthase family. As to quaternary structure, homotetramer. Requires Mn(2+) as cofactor. The cofactor is Mg(2+). Co(2+) is required as a cofactor. It depends on K(+) as a cofactor.

It localises to the cytoplasm. The catalysed reaction is L-methionine + ATP + H2O = S-adenosyl-L-methionine + phosphate + diphosphate. Its pathway is amino-acid biosynthesis; S-adenosyl-L-methionine biosynthesis; S-adenosyl-L-methionine from L-methionine: step 1/1. In terms of biological role, catalyzes the formation of S-adenosylmethionine from methionine and ATP. The reaction comprises two steps that are both catalyzed by the same enzyme: formation of S-adenosylmethionine (AdoMet) and triphosphate, and subsequent hydrolysis of the triphosphate. The protein is S-adenosylmethionine synthase 2 (METK2) of Populus trichocarpa (Western balsam poplar).